We begin with the raw amino-acid sequence, 95 residues long: Small ribosomal subunit protein uS19 (95 aa).

This sequence belongs to the universal ribosomal protein uS19 family.

In terms of biological role, protein S19 forms a complex with S13 that binds strongly to the 16S ribosomal RNA. The sequence is that of Small ribosomal subunit protein uS19 from Clostridium kluyveri (strain NBRC 12016).